Reading from the N-terminus, the 300-residue chain is F-box protein SKIP1 (300 aa).

One can recognise an F-box; degenerate domain in the interval 11–52 (LAPEILINIISRLTIQELWTGPMFVQKSWLTVCRDPYLWSIF).

In terms of assembly, part of a SCF (ASK-cullin-F-box) protein ligase complex. Interacts with SKP1A/ASK1 and SKP1B/ASK2.

The protein resides in the nucleus. The protein operates within protein modification; protein ubiquitination. Its function is as follows. Component of SCF(ASK-cullin-F-box) E3 ubiquitin ligase complexes, which may mediate the ubiquitination and subsequent proteasomal degradation of target proteins. This is F-box protein SKIP1 (SKIP1) from Arabidopsis thaliana (Mouse-ear cress).